A 473-amino-acid polypeptide reads, in one-letter code: Arginine biosynthesis bifunctional protein ArgJ, mitochondrial (473 aa).

Substrate contacts are provided by Thr201, Lys230, Thr241, Glu328, Asn468, and Thr473. Thr241 acts as the Nucleophile in catalysis.

The protein belongs to the ArgJ family. Heterodimer of an alpha and a beta chain. Post-translationally, the alpha and beta chains are autoproteolytically processed from a single precursor protein within the mitochondrion.

The protein localises to the mitochondrion matrix. The catalysed reaction is N(2)-acetyl-L-ornithine + L-glutamate = N-acetyl-L-glutamate + L-ornithine. The enzyme catalyses L-glutamate + acetyl-CoA = N-acetyl-L-glutamate + CoA + H(+). It functions in the pathway amino-acid biosynthesis; L-arginine biosynthesis; L-ornithine and N-acetyl-L-glutamate from L-glutamate and N(2)-acetyl-L-ornithine (cyclic): step 1/1. The protein operates within amino-acid biosynthesis; L-arginine biosynthesis; N(2)-acetyl-L-ornithine from L-glutamate: step 1/4. Its function is as follows. Catalyzes two activities which are involved in the cyclic version of arginine biosynthesis: the synthesis of acetylglutamate from glutamate and acetyl-CoA, and of ornithine by transacetylation between acetylornithine and glutamate. The chain is Arginine biosynthesis bifunctional protein ArgJ, mitochondrial from Ajellomyces capsulatus (strain H143) (Darling's disease fungus).